A 283-amino-acid chain; its full sequence is Thymidylate synthase (283 aa).

R22 serves as a coordination point for dUMP. Catalysis depends on C160, which acts as the Nucleophile. Residues 180 to 183 (RSCD), N191, and 221 to 223 (HIY) contribute to the dUMP site. D183 serves as a coordination point for (6R)-5,10-methylene-5,6,7,8-tetrahydrofolate. Residue S282 coordinates (6R)-5,10-methylene-5,6,7,8-tetrahydrofolate.

Belongs to the thymidylate synthase family. Bacterial-type ThyA subfamily. Homodimer.

It localises to the cytoplasm. The enzyme catalyses dUMP + (6R)-5,10-methylene-5,6,7,8-tetrahydrofolate = 7,8-dihydrofolate + dTMP. It functions in the pathway pyrimidine metabolism; dTTP biosynthesis. In terms of biological role, catalyzes the reductive methylation of 2'-deoxyuridine-5'-monophosphate (dUMP) to 2'-deoxythymidine-5'-monophosphate (dTMP) while utilizing 5,10-methylenetetrahydrofolate (mTHF) as the methyl donor and reductant in the reaction, yielding dihydrofolate (DHF) as a by-product. This enzymatic reaction provides an intracellular de novo source of dTMP, an essential precursor for DNA biosynthesis. This is Thymidylate synthase from Shewanella loihica (strain ATCC BAA-1088 / PV-4).